Reading from the N-terminus, the 551-residue chain is Interleukin-2 receptor subunit beta (551 aa).

A signal peptide spans 1–26 (MATLALSWCLPLLILLLPLATSSASA). Residues 27-240 (AVNGTSRFTC…TKPAALGKDT (214 aa)) are Extracellular-facing. N-linked (GlcNAc...) asparagine glycosylation is found at asparagine 29, asparagine 43, and asparagine 71. Cysteine 36 and cysteine 46 are oxidised to a cystine. An intrachain disulfide couples cysteine 74 to cysteine 86. The 101-residue stretch at 134 to 234 (APISLQVVHV…QPLAFRTKPA (101 aa)) folds into the Fibronectin type-III domain. A glycan (N-linked (GlcNAc...) asparagine) is linked at asparagine 149. A WSXWS motif motif is present at residues 220 to 224 (WSPWS). Residues 241–265 (IPWLGHLLVGLSGAFGFIILVYLLI) form a helical membrane-spanning segment. The Cytoplasmic portion of the chain corresponds to 266–551 (NCRNTGPWLK…LQDQDPTHLV (286 aa)). Positions 278–286 (LKCHTPDPS) match the Box 1 motif motif. Disordered stretches follow at residues 389-417 (EEEPDEGGADAPTGSSPQPLRPLSAEDDA), 430-484 (FSPS…DLVD), and 496-517 (AGEQVPDPGPREPFSFPWARPP).

This sequence belongs to the type I cytokine receptor family. Type 4 subfamily. As to quaternary structure, non-covalent dimer of an alpha and a beta subunit. IL2R exists in 3 different forms: a high affinity dimer, an intermediate affinity monomer (beta subunit), and a low affinity monomer (alpha subunit). The high and intermediate affinity forms also associate with a gamma subunit. Interacts with SHB upon interleukin stimulation.

It is found in the cell membrane. Its subcellular location is the cell surface. In terms of biological role, receptor for interleukin-2. This beta subunit is involved in receptor mediated endocytosis and transduces the mitogenic signals of IL2. Probably in association with IL15RA, involved in the stimulation of neutrophil phagocytosis by IL15. The chain is Interleukin-2 receptor subunit beta (IL2RB) from Macaca fascicularis (Crab-eating macaque).